The chain runs to 721 residues: S-adenosyl-L-methionine-dependent tRNA 4-demethylwyosine synthase TYW1 (721 aa).

Residues V71 to I229 enclose the Flavodoxin-like domain. FMN contacts are provided by residues S77–T81 and V168–L200. Disordered regions lie at residues A242–T291 and D305–G339. Residues G250–D274 show a composition bias toward basic and acidic residues. A compositionally biased stretch (acidic residues) spans A275–G290. Positions V313–G325 are enriched in basic and acidic residues. Residues Y389–E635 form the Radical SAM core domain. Positions 405, 409, and 412 each coordinate [4Fe-4S] cluster.

This sequence belongs to the TYW1 family. [4Fe-4S] cluster is required as a cofactor.

The catalysed reaction is N(1)-methylguanosine(37) in tRNA(Phe) + pyruvate + S-adenosyl-L-methionine = 4-demethylwyosine(37) in tRNA(Phe) + 5'-deoxyadenosine + L-methionine + CO2 + H2O. It functions in the pathway tRNA modification; wybutosine-tRNA(Phe) biosynthesis. Probable component of the wybutosine biosynthesis pathway. Wybutosine is a hyper modified guanosine with a tricyclic base found at the 3'-position adjacent to the anticodon of eukaryotic phenylalanine tRNA. Catalyzes the condensation of N-methylguanine with 2 carbon atoms from pyruvate to form the tricyclic 4-demethylwyosine, an intermediate in wybutosine biosynthesis. The protein is S-adenosyl-L-methionine-dependent tRNA 4-demethylwyosine synthase TYW1 (Tyw1) of Mus musculus (Mouse).